Here is a 105-residue protein sequence, read N- to C-terminus: Extracellular guanyl-specific ribonuclease Fl1 (105 aa).

Disulfide bonds link Cys5–Cys101 and Cys23–Cys82. His39 is a catalytic residue. The active-site Proton acceptor is Glu57. The active-site Proton donor is His90.

This sequence belongs to the ribonuclease N1/T1 family.

It carries out the reaction [RNA] containing guanosine + H2O = an [RNA fragment]-3'-guanosine-3'-phosphate + a 5'-hydroxy-ribonucleotide-3'-[RNA fragment].. The chain is Extracellular guanyl-specific ribonuclease Fl1 from Gibberella baccata (Fusarium lateritium).